A 197-amino-acid polypeptide reads, in one-letter code: MEKALILITAYLLGSIPFALLVGKIGYGIDIREHGSGNLGGTNTFRVLGVKAGMIVTCGDMLKGTLAASLPVLFSVHIHPLLAGVCAVIGHTYPIFAKFRGGKAVATSAGVMLFYSPFLFVSLLTVFFIVLYISKYVSLSSMLAGVYAVIYTIFFTDDIPLMIAVSLLTAFIFYRHRANIKRIVNKTEPKIKWLGRK.

Transmembrane regions (helical) follow at residues 5–25 (LILI…VGKI), 70–90 (LPVL…AVIG), 111–131 (VMLF…FIVL), and 153–173 (IFFT…AFIF).

Belongs to the PlsY family. As to quaternary structure, probably interacts with PlsX.

The protein localises to the cell membrane. The enzyme catalyses an acyl phosphate + sn-glycerol 3-phosphate = a 1-acyl-sn-glycero-3-phosphate + phosphate. It functions in the pathway lipid metabolism; phospholipid metabolism. Functionally, catalyzes the transfer of an acyl group from acyl-phosphate (acyl-PO(4)) to glycerol-3-phosphate (G3P) to form lysophosphatidic acid (LPA). This enzyme utilizes acyl-phosphate as fatty acyl donor, but not acyl-CoA or acyl-ACP. The protein is Glycerol-3-phosphate acyltransferase of Geobacillus sp. (strain WCH70).